Reading from the N-terminus, the 437-residue chain is Elongation factor 1-gamma (437 aa).

At Ala2 the chain carries N-acetylalanine. The GST N-terminal domain occupies Ala2 to Ser87. The GST C-terminal domain occupies Thr88 to Phe216. 2 positions are modified to N6-acetyllysine: Lys147 and Lys212. Residues Phe221–Ala254 show a composition bias toward basic and acidic residues. Residues Phe221–Gln268 form a disordered region. Lys253 participates in a covalent cross-link: Glycyl lysine isopeptide (Lys-Gly) (interchain with G-Cter in SUMO1). Residues Ala276–Lys437 form the EF-1-gamma C-terminal domain. Lys285 participates in a covalent cross-link: Glycyl lysine isopeptide (Lys-Gly) (interchain with G-Cter in SUMO2). Lys401 is subject to N6-acetyllysine. Lys434 is modified (N6-acetyllysine; alternate). N6-malonyllysine; alternate is present on Lys434.

EF-1 is composed of four subunits: alpha, beta, delta, and gamma.

Functionally, probably plays a role in anchoring the complex to other cellular components. This is Elongation factor 1-gamma (EEF1G) from Macaca fascicularis (Crab-eating macaque).